We begin with the raw amino-acid sequence, 291 residues long: Bifunctional protein FolD (291 aa).

NADP(+) contacts are provided by residues 168–170, Thr195, and Val236; that span reads GRG.

It belongs to the tetrahydrofolate dehydrogenase/cyclohydrolase family. In terms of assembly, homodimer.

It catalyses the reaction (6R)-5,10-methylene-5,6,7,8-tetrahydrofolate + NADP(+) = (6R)-5,10-methenyltetrahydrofolate + NADPH. The catalysed reaction is (6R)-5,10-methenyltetrahydrofolate + H2O = (6R)-10-formyltetrahydrofolate + H(+). It functions in the pathway one-carbon metabolism; tetrahydrofolate interconversion. In terms of biological role, catalyzes the oxidation of 5,10-methylenetetrahydrofolate to 5,10-methenyltetrahydrofolate and then the hydrolysis of 5,10-methenyltetrahydrofolate to 10-formyltetrahydrofolate. This chain is Bifunctional protein FolD, found in Bifidobacterium longum (strain DJO10A).